The primary structure comprises 457 residues: Adenylosuccinate synthetase isozyme 2 (457 aa).

Residues 40-46 and 68-70 each bind GTP; these read GDEGKGK and GHT. Catalysis depends on D41, which acts as the Proton acceptor. Positions 41 and 68 each coordinate Mg(2+). D41 is a binding site for substrate. Residues 41-44, 66-69, T163, R177, N256, T271, and R335 each bind IMP; these read DEGK and NAGH. H69 acts as the Proton donor in catalysis. 331–337 is a substrate binding site; it reads VTTGRKR. Residues R337, 363–365, and 445–448 each bind GTP; these read KLD and GVGK.

The protein belongs to the adenylosuccinate synthetase family. Homodimer. It depends on Mg(2+) as a cofactor.

Its subcellular location is the cytoplasm. It is found in the mitochondrion. The enzyme catalyses IMP + L-aspartate + GTP = N(6)-(1,2-dicarboxyethyl)-AMP + GDP + phosphate + 2 H(+). The protein operates within purine metabolism; AMP biosynthesis via de novo pathway; AMP from IMP: step 1/2. Inhibited competitively by AMP and IMP and non-competitively by fructose 1,6-bisphosphate. In terms of biological role, plays an important role in the de novo pathway and in the salvage pathway of purine nucleotide biosynthesis. Catalyzes the first committed step in the biosynthesis of AMP from IMP. This Xenopus laevis (African clawed frog) protein is Adenylosuccinate synthetase isozyme 2 (adss2).